A 151-amino-acid polypeptide reads, in one-letter code: 3-hydroxyacyl-[acyl-carrier-protein] dehydratase FabZ (151 aa).

Histidine 56 is a catalytic residue.

This sequence belongs to the thioester dehydratase family. FabZ subfamily.

The protein localises to the cytoplasm. It carries out the reaction a (3R)-hydroxyacyl-[ACP] = a (2E)-enoyl-[ACP] + H2O. Its function is as follows. Involved in unsaturated fatty acids biosynthesis. Catalyzes the dehydration of short chain beta-hydroxyacyl-ACPs and long chain saturated and unsaturated beta-hydroxyacyl-ACPs. The protein is 3-hydroxyacyl-[acyl-carrier-protein] dehydratase FabZ of Rhodopseudomonas palustris (strain ATCC BAA-98 / CGA009).